Reading from the N-terminus, the 354-residue chain is S-adenosylmethionine:tRNA ribosyltransferase-isomerase (354 aa).

Belongs to the QueA family. As to quaternary structure, monomer.

The protein resides in the cytoplasm. It catalyses the reaction 7-aminomethyl-7-carbaguanosine(34) in tRNA + S-adenosyl-L-methionine = epoxyqueuosine(34) in tRNA + adenine + L-methionine + 2 H(+). It participates in tRNA modification; tRNA-queuosine biosynthesis. Transfers and isomerizes the ribose moiety from AdoMet to the 7-aminomethyl group of 7-deazaguanine (preQ1-tRNA) to give epoxyqueuosine (oQ-tRNA). The protein is S-adenosylmethionine:tRNA ribosyltransferase-isomerase of Salmonella paratyphi A (strain ATCC 9150 / SARB42).